We begin with the raw amino-acid sequence, 153 residues long: Ribosome maturation factor RimP (153 aa).

Belongs to the RimP family.

It is found in the cytoplasm. Required for maturation of 30S ribosomal subunits. This chain is Ribosome maturation factor RimP, found in Burkholderia pseudomallei (strain 1710b).